Reading from the N-terminus, the 440-residue chain is Nitrilase and fragile histidine triad fusion protein NitFhit (440 aa).

The CN hydrolase domain occupies 14 to 264; sequence RHFIAVCQMT…VDMCFAEIDL (251 aa). Active-site residues include E54, K127, and C169. Residues 297-405 enclose the HIT domain; sequence GGLKFARFNI…LPRRAGDFGD (109 aa). The Histidine triad motif signature appears at 390–394; it reads HVHIH. The Tele-AMP-histidine intermediate role is filled by H392.

The protein in the N-terminal section; belongs to the UPF0012 family. As to quaternary structure, homotetramer. Mn(2+) serves as cofactor.

The catalysed reaction is P(1),P(3)-bis(5'-adenosyl) triphosphate + H2O = AMP + ADP + 2 H(+). Its function is as follows. Cleaves A-5'-PPP-5'A to yield AMP and ADP. The chain is Nitrilase and fragile histidine triad fusion protein NitFhit from Caenorhabditis elegans.